A 564-amino-acid polypeptide reads, in one-letter code: Ribonuclease J (564 aa).

Positions 85, 87, 89, 90, 153, and 175 each coordinate Zn(2+). H375–H379 lines the substrate pocket. H401 contributes to the Zn(2+) binding site.

Belongs to the metallo-beta-lactamase superfamily. RNA-metabolizing metallo-beta-lactamase-like family. Bacterial RNase J subfamily. As to quaternary structure, homodimer, may be a subunit of the RNA degradosome. Zn(2+) is required as a cofactor.

The protein resides in the cytoplasm. In terms of biological role, an RNase that has 5'-3' exonuclease and possibly endonuclease activity. Plays a role in 16S and 23S rRNA processing. Might have a role in mRNA maturation and/or decay. In Sinorhizobium meliloti (strain Sm2011 / Rm2011 / 2011), this protein is Ribonuclease J.